The chain runs to 151 residues: Large ribosomal subunit protein bL9 (151 aa).

This sequence belongs to the bacterial ribosomal protein bL9 family.

Functionally, binds to the 23S rRNA. In Kosmotoga olearia (strain ATCC BAA-1733 / DSM 21960 / TBF 19.5.1), this protein is Large ribosomal subunit protein bL9.